The chain runs to 159 residues: 16 kDa outer membrane lipoprotein (159 aa).

Positions methionine 1 to serine 21 are cleaved as a signal peptide. Residue cysteine 22 is the site of N-palmitoyl cysteine attachment. The S-diacylglycerol cysteine moiety is linked to residue cysteine 22.

The protein localises to the cell outer membrane. The chain is 16 kDa outer membrane lipoprotein (smpA) from Brachyspira hyodysenteriae (Treponema hyodysenteriae).